A 115-amino-acid polypeptide reads, in one-letter code: Large ribosomal subunit protein bL19 (115 aa).

Belongs to the bacterial ribosomal protein bL19 family.

In terms of biological role, this protein is located at the 30S-50S ribosomal subunit interface and may play a role in the structure and function of the aminoacyl-tRNA binding site. The polypeptide is Large ribosomal subunit protein bL19 (Streptococcus pneumoniae serotype 2 (strain D39 / NCTC 7466)).